A 445-amino-acid chain; its full sequence is UPF0210 protein Sez_0396 (445 aa).

This sequence belongs to the UPF0210 family. Homodimer.

The chain is UPF0210 protein Sez_0396 from Streptococcus equi subsp. zooepidemicus (strain MGCS10565).